A 439-amino-acid polypeptide reads, in one-letter code: Ribosomal protein uS12 methylthiotransferase RimO (439 aa).

The 113-residue stretch at Ser-2–Asn-114 folds into the MTTase N-terminal domain. The [4Fe-4S] cluster site is built by Cys-11, Cys-45, Cys-77, Cys-146, Cys-150, and Cys-153. One can recognise a Radical SAM core domain in the interval Thr-132–Glu-363.

The protein belongs to the methylthiotransferase family. RimO subfamily. [4Fe-4S] cluster is required as a cofactor.

It localises to the cytoplasm. The enzyme catalyses L-aspartate(89)-[ribosomal protein uS12]-hydrogen + (sulfur carrier)-SH + AH2 + 2 S-adenosyl-L-methionine = 3-methylsulfanyl-L-aspartate(89)-[ribosomal protein uS12]-hydrogen + (sulfur carrier)-H + 5'-deoxyadenosine + L-methionine + A + S-adenosyl-L-homocysteine + 2 H(+). In terms of biological role, catalyzes the methylthiolation of an aspartic acid residue of ribosomal protein uS12. The chain is Ribosomal protein uS12 methylthiotransferase RimO from Campylobacter jejuni subsp. jejuni serotype O:23/36 (strain 81-176).